A 633-amino-acid chain; its full sequence is DNA topoisomerase 1 (633 aa).

The region spanning 6 to 115 (KKYIVVESPA…KNRIVFSEIT (110 aa)) is the Toprim domain. Mg(2+) is bound by residues Glu-12 and Asp-84. Residues 130-543 (DMKKVRAQLA…EFYESFSSVF (414 aa)) form the Topo IA-type catalytic domain. Positions 164–169 (SAGRVQ) are interaction with DNA. The O-(5'-phospho-DNA)-tyrosine intermediate role is filled by Tyr-288. 2 disulfides stabilise this stretch: Cys-559–Cys-578 and Cys-561–Cys-580. The C4-type zinc-finger motif lies at 559–580 (CSCGKEMRLSFGKYGFYLKCEC). Residues 601–633 (LGRKDSESGSPDGRSVEGKGNLSEKRRKGKKGS) are disordered.

Belongs to the type IA topoisomerase family. As to quaternary structure, monomer. The cofactor is Mg(2+).

The catalysed reaction is ATP-independent breakage of single-stranded DNA, followed by passage and rejoining.. Functionally, releases the supercoiling and torsional tension of DNA, which is introduced during the DNA replication and transcription, by transiently cleaving and rejoining one strand of the DNA duplex. Introduces a single-strand break via transesterification at a target site in duplex DNA. The scissile phosphodiester is attacked by the catalytic tyrosine of the enzyme, resulting in the formation of a DNA-(5'-phosphotyrosyl)-enzyme intermediate and the expulsion of a 3'-OH DNA strand. The free DNA strand then undergoes passage around the unbroken strand, thus removing DNA supercoils. Finally, in the religation step, the DNA 3'-OH attacks the covalent intermediate to expel the active-site tyrosine and restore the DNA phosphodiester backbone. The sequence is that of DNA topoisomerase 1 from Thermotoga maritima (strain ATCC 43589 / DSM 3109 / JCM 10099 / NBRC 100826 / MSB8).